The sequence spans 494 residues: Probable cytosol aminopeptidase (494 aa).

Mn(2+) is bound by residues K260 and D265. The active site involves K272. Positions 283, 342, and 344 each coordinate Mn(2+). Residue R346 is part of the active site.

Belongs to the peptidase M17 family. It depends on Mn(2+) as a cofactor.

The protein resides in the cytoplasm. It carries out the reaction Release of an N-terminal amino acid, Xaa-|-Yaa-, in which Xaa is preferably Leu, but may be other amino acids including Pro although not Arg or Lys, and Yaa may be Pro. Amino acid amides and methyl esters are also readily hydrolyzed, but rates on arylamides are exceedingly low.. The catalysed reaction is Release of an N-terminal amino acid, preferentially leucine, but not glutamic or aspartic acids.. Its function is as follows. Presumably involved in the processing and regular turnover of intracellular proteins. Catalyzes the removal of unsubstituted N-terminal amino acids from various peptides. The polypeptide is Probable cytosol aminopeptidase (Bacillus thuringiensis (strain Al Hakam)).